The sequence spans 125 residues: Large ribosomal subunit protein eL31 (125 aa).

The protein belongs to the eukaryotic ribosomal protein eL31 family. In terms of assembly, component of the large ribosomal subunit.

The protein localises to the cytoplasm. Functionally, component of the large ribosomal subunit. The ribosome is a large ribonucleoprotein complex responsible for the synthesis of proteins in the cell. The polypeptide is Large ribosomal subunit protein eL31 (rpl31) (Xenopus laevis (African clawed frog)).